The primary structure comprises 451 residues: Adenylosuccinate synthetase isozyme 2 (451 aa).

GTP is bound by residues 34-40 (GDEGKGK) and 62-64 (GHT). Aspartate 35 acts as the Proton acceptor in catalysis. 2 residues coordinate Mg(2+): aspartate 35 and glycine 62. Aspartate 35 contributes to the substrate binding site. Residues 35–38 (DEGK), 60–63 (NAGH), threonine 157, arginine 171, asparagine 250, threonine 265, and arginine 329 contribute to the IMP site. Catalysis depends on histidine 63, which acts as the Proton donor. 325-331 (VTTGRKR) is a substrate binding site. Residues arginine 331, 357–359 (KLD), and 439–442 (GVGK) contribute to the GTP site.

Belongs to the adenylosuccinate synthetase family. As to quaternary structure, homodimer. Mg(2+) serves as cofactor.

The protein localises to the cytoplasm. It localises to the mitochondrion. The enzyme catalyses IMP + L-aspartate + GTP = N(6)-(1,2-dicarboxyethyl)-AMP + GDP + phosphate + 2 H(+). It functions in the pathway purine metabolism; AMP biosynthesis via de novo pathway; AMP from IMP: step 1/2. Its activity is regulated as follows. Inhibited competitively by AMP and IMP and non-competitively by fructose 1,6-bisphosphate. In terms of biological role, plays an important role in the de novo pathway and in the salvage pathway of purine nucleotide biosynthesis. Catalyzes the first committed step in the biosynthesis of AMP from IMP. This is Adenylosuccinate synthetase isozyme 2 from Gallus gallus (Chicken).